The following is a 191-amino-acid chain: Potassium-transporting ATPase KdpC subunit (191 aa).

The helical transmembrane segment at 6-26 (PALVLFILLTLLTGGVYPLLT) threads the bilayer.

Belongs to the KdpC family. The system is composed of three essential subunits: KdpA, KdpB and KdpC.

The protein resides in the cell inner membrane. Functionally, part of the high-affinity ATP-driven potassium transport (or Kdp) system, which catalyzes the hydrolysis of ATP coupled with the electrogenic transport of potassium into the cytoplasm. This subunit acts as a catalytic chaperone that increases the ATP-binding affinity of the ATP-hydrolyzing subunit KdpB by the formation of a transient KdpB/KdpC/ATP ternary complex. This chain is Potassium-transporting ATPase KdpC subunit, found in Klebsiella pneumoniae subsp. pneumoniae (strain ATCC 700721 / MGH 78578).